The following is a 2684-amino-acid chain: Teneurin-1 (2684 aa).

3 disordered regions span residues 1–37 (MFQH…HDYT), 127–156 (TTSS…PTYS), and 170–204 (GTNQ…KKFD). Residues 1 to 216 (MFQHRTTNAQ…SDTCSRWPSK (216 aa)) are Cytoplasmic-facing. Positions 11–24 (GPPPNRPMPRPPAG) are enriched in pro residues. Positions 127 to 136 (TTSSTLSPAS) are enriched in low complexity. Residues 217 to 237 (WNILLAAALLVALFVICILLF) form a helical membrane-spanning segment. Topologically, residues 238 to 2684 (RAPNYVYTQP…VHSWKFRKSE (2447 aa)) are extracellular. EGF-like domains lie at 463–499 (TGRT…KECE) and 501–534 (RHNW…EACE). Cystine bridges form between C467/C476, C472/C487, C489/C498, C505/C516, C510/C522, and C524/C533. Residues 576–614 (PQAQSPPRRGQEPTESSKTRKAQVKPTPTSEKKKESREL) are disordered. 2 stretches are compositionally biased toward basic and acidic residues: residues 584 to 593 (RGQEPTESSK) and 605 to 614 (SEKKKESREL). EGF-like domains follow at residues 650–684 (DSVD…SNCT) and 716–753 (AIDG…VDCS). 6 disulfide bridges follow: C654-C666, C659-C672, C674-C683, C720-C730, C724-C741, and C743-C752. 4 NHL repeats span residues 1276-1317 (DSCG…IDTT), 1334-1378 (RTCA…VVHD), 1398-1441 (SASA…VRKL), and 1470-1513 (AVSL…VSAR).

This sequence belongs to the tenascin family. Teneurin subfamily. Post-translationally, probably proteolytically processed to generate a N-terminal intracellular domain. As to expression, isoform 1 is mainly expressed in organs derived from the mesoderm, including the pharynx, vulva muscles, gonad distal tip cells, intestine and several tail neurons. Isoform 2 is mainly expressed in the organs derived from the ectoderm, including hypodermal cells, head ganglion neurons and tail neurons (at protein level).

It is found in the nucleus. The protein resides in the cell membrane. Its subcellular location is the membrane. Its function is as follows. Plays a role in the gonadal basement membrane maintenance and/or adhesion early in development. Contributes to the guidance of pharyngeal neurons. In Caenorhabditis elegans, this protein is Teneurin-1 (ten-1).